A 188-amino-acid polypeptide reads, in one-letter code: RNA 2',3'-cyclic phosphodiesterase (188 aa).

The active-site Proton donor is His42. 2 consecutive short sequence motifs (HXTX) follow at residues 42–45 (HMTL) and 130–133 (HVTI). Catalysis depends on His130, which acts as the Proton acceptor.

It belongs to the 2H phosphoesterase superfamily. ThpR family.

The catalysed reaction is a 3'-end 2',3'-cyclophospho-ribonucleotide-RNA + H2O = a 3'-end 2'-phospho-ribonucleotide-RNA + H(+). Hydrolyzes RNA 2',3'-cyclic phosphodiester to an RNA 2'-phosphomonoester. This chain is RNA 2',3'-cyclic phosphodiesterase, found in Aquifex aeolicus (strain VF5).